A 486-amino-acid polypeptide reads, in one-letter code: Patatin-like phospholipase domain-containing protein 2 (486 aa).

Residues 1 to 8 (MFPRETKW) lie on the Cytoplasmic side of the membrane. A helical transmembrane segment spans residues 9–29 (NISFAGCGFLGVYHIGVASCL). In terms of domain architecture, PNPLA spans 10–179 (ISFAGCGFLG…SDNLPLYELK (170 aa)). The short motif at 14 to 19 (GCGFLG) is the GXGXXG element. Residues 30-42 (REHAPFLVANATH) lie on the Extracellular side of the membrane. The N-linked (GlcNAc...) asparagine glycan is linked to asparagine 39. The helical transmembrane segment at 43-63 (IYGASAGALTATALVTGACLG) threads the bilayer. The short motif at 45–49 (GASAG) is the GXSXG element. The active-site Nucleophile is serine 47. The Cytoplasmic segment spans residues 64-137 (EAGANIIEVS…IISHFSSKDE (74 aa)). Lysine 92 participates in a covalent cross-link: Glycyl lysine isopeptide (Lys-Gly) (interchain with G-Cter in ubiquitin). The chain crosses the membrane as a helical span at residues 138–158 (LIQANVCSTFIPVYCGLIPPT). The Extracellular segment spans residues 159-331 (LQGVRYVDGG…TTLSNMLPVR (173 aa)). Residue aspartate 166 is the Proton acceptor of the active site. Residues 166 to 168 (DGG) carry the DGA/G motif. Residues 332–352 (LATAMMVPYTLPLESAVSFTI) traverse the membrane as a helical segment. Over 353–486 (RLLEWLPDVP…PQDPPGLPPC (134 aa)) the chain is Cytoplasmic. Serine 374 is modified (phosphoserine; in vitro). 2 positions are modified to phosphoserine; by PKA: serine 396 and serine 406. Serine 430 and serine 468 each carry phosphoserine; in vitro. Positions 465-476 (APASPTAADPAT) are enriched in low complexity. Residues 465 to 486 (APASPTAADPATPQDPPGLPPC) are disordered. Pro residues predominate over residues 477–486 (PQDPPGLPPC).

In terms of assembly, interacts with ABHD5; this association stimulates PNPLA2 triglyceride hydrolase activity. Interacts with SERPINF1; this interaction stimulates the phospholipase A2 activity of PNPLA2. Despite a colocalization in lipid droplets, it probably does not interact with PLIN. Interacts with PLIN5; prevents interaction with ABHD5. Interacts with FAF2. Phosphorylation at Ser-406 by PKA is increased during fasting and moderate intensity exercise, and moderately increases lipolytic activity. In terms of processing, ubiquitinated by PEX2 in response to reactive oxygen species (ROS), leading to its degradation. Ubiquitination is stimulated by LDAH. Expressed at high levels in white and brown adipose tissue, and to a lesser degree in testis and cardiac muscle. Barely detected in liver, spleen, thymus, kidney, skeletal muscle, and brain. Among the white adipose depots, gonadal fat showed the highest level of expression compared with inguinal and renal white adipose tissues.

The protein localises to the lipid droplet. Its subcellular location is the cell membrane. The protein resides in the cytoplasm. It carries out the reaction a triacylglycerol + H2O = a diacylglycerol + a fatty acid + H(+). It catalyses the reaction a triacylglycerol + H2O = a 1,2-diacylglycerol + a fatty acid + H(+). The enzyme catalyses a triacylglycerol + H2O = a 1,3-diacylglycerol + a fatty acid + H(+). The catalysed reaction is a triacyl-sn-glycerol + H2O = a 2,3-diacyl-sn-glycerol + a fatty acid + H(+). It carries out the reaction a triacyl-sn-glycerol + H2O = a 1,3-diacyl-sn-glycerol + a fatty acid + H(+). It catalyses the reaction 1,2,3-tri-(9Z-octadecenoyl)-glycerol + H2O = 1,3-di-(9Z-octadecenoyl)-glycerol + (9Z)-octadecenoate + H(+). The enzyme catalyses 1,2,3-tri-(9Z)-hexadecenoylglycerol + H2O = 1,3-di-(9Z)-hexadecenoylglycerol + (9Z)-hexadecenoate + H(+). The catalysed reaction is 1,2,3-tri-(9Z,12Z)-octadecadienoylglycerol + H2O = 1,3-di-(9Z,12Z)-octadecadienoylglycerol + (9Z,12Z)-octadecadienoate + H(+). It carries out the reaction 1,2,3-tri-(9Z,12Z,15Z)-octadecatrienoylglycerol + H2O = 1,3-di-(9Z,12Z,15Z)-octadecatrienoylglycerol + (9Z,12Z,15Z)-octadecatrienoate + H(+). It catalyses the reaction 1,3-di-(9Z)-octadecenoyl-2-hexadecanoylglycerol + H2O = 1,3-di-(9Z-octadecenoyl)-glycerol + hexadecanoate + H(+). The enzyme catalyses 1,2-di-(9Z)-octadecenoyl-3-hexadecanoyl-sn-glycerol + H2O = 1-(9Z)-octadecenoyl-3-hexadecanoyl-sn-glycerol + (9Z)-octadecenoate + H(+). The catalysed reaction is 1-hexadecanoyl-2,3-di-(9Z)-octadecenoyl-sn-glycerol + H2O = 1-hexadecanoyl-3-(9Z)-octadecenoyl-sn-glycerol + (9Z)-octadecenoate + H(+). It carries out the reaction 1,2,3-tri-(9Z-octadecenoyl)-glycerol + H2O = 2,3-di-(9Z)-octadecenoyl-sn-glycerol + (9Z)-octadecenoate + H(+). It catalyses the reaction 1,2,3-tri-(9Z)-hexadecenoylglycerol + H2O = 2,3-di-(9Z)-hexadecenoyl-sn-glycerol + (9Z)-hexadecenoate + H(+). The enzyme catalyses 1,2,3-tri-(9Z,12Z)-octadecadienoylglycerol + H2O = 2,3-di-(9Z,12Z)-octadecadienoyl-sn-glycerol + (9Z,12Z)-octadecadienoate + H(+). The catalysed reaction is 1,2,3-tri-(9Z,12Z,15Z)-octadecatrienoylglycerol + H2O = 2,3-di-(9Z,12Z,15Z)-octadecatrienoyl-sn-glycerol + (9Z,12Z,15Z)-octadecatrienoate + H(+). It carries out the reaction 1,3-di-(9Z)-octadecenoyl-2-hexadecanoylglycerol + H2O = 2-hexadecanoyl-3-(9Z)-octadecenoyl-sn-glycerol + (9Z)-octadecenoate + H(+). It catalyses the reaction 1-hexadecanoyl-2,3-di-(9Z)-octadecenoyl-sn-glycerol + H2O = 2,3-di-(9Z)-octadecenoyl-sn-glycerol + hexadecanoate + H(+). The enzyme catalyses 1,2-di-(9Z)-octadecenoyl-3-hexadecanoyl-sn-glycerol + H2O = 2-(9Z-octadecenoyl)-3-hexadecanoyl-sn-glycerol + (9Z)-octadecenoate + H(+). The catalysed reaction is 1,2-di-(9Z-octadecenoyl)-glycerol + (9Z)-octadecenoate + H(+) = 1,2,3-tri-(9Z-octadecenoyl)-glycerol + H2O. It carries out the reaction a 1-acylglycerol + a 1,3-diacylglycerol = a triacylglycerol + glycerol. It catalyses the reaction a 1-acylglycerol + a 1,2-diacylglycerol = a triacylglycerol + glycerol. The enzyme catalyses 2 a 1-acylglycerol = a 1,2-diacylglycerol + glycerol. The catalysed reaction is a triacylglycerol + all-trans-retinol = an all-trans-retinyl ester + a diacylglycerol. It carries out the reaction 1-(9Z-octadecenoyl)-glycerol + 1,3-di-(9Z-octadecenoyl)-glycerol = 1,2,3-tri-(9Z-octadecenoyl)-glycerol + glycerol. It catalyses the reaction 1-(9Z-octadecenoyl)-glycerol + 1,2-di-(9Z-octadecenoyl)-glycerol = 1,2,3-tri-(9Z-octadecenoyl)-glycerol + glycerol. The enzyme catalyses 2 1-(9Z-octadecenoyl)-glycerol = 1,2-di-(9Z-octadecenoyl)-glycerol + glycerol. The catalysed reaction is 1,2,3-tri-(9Z-octadecenoyl)-glycerol + all-trans-retinol = all-trans-retinyl 9Z-octadecenoate + di-(9Z)-octadecenoylglycerol. It carries out the reaction a 1,2-diacyl-sn-glycero-3-phosphocholine + H2O = a 1-acyl-sn-glycero-3-phosphocholine + a fatty acid + H(+). It catalyses the reaction 1,2,3-tri-(9Z-octadecenoyl)-glycerol + 9-hydroxy-octadecanoate = 9-(9Z-octadecenoyloxy)-octadecanoate + 2,3-di-(9Z)-octadecenoyl-sn-glycerol. The enzyme catalyses 1-hexadecanoyl-2,3-di-(9Z)-octadecenoyl-sn-glycerol + 9-hydroxy-octadecanoate = 9-hexadecanoyloxy-octadecanoate + 2,3-di-(9Z)-octadecenoyl-sn-glycerol. The catalysed reaction is 1,2,3-tri-(10Z)-heptadecenoylglycerol + 9-hydroxy-octadecanoate = 2,3-di-(10Z-heptadecenoyl)-sn-glycerol + 9-(10Z-heptadecenoyloxy)-octadecanoate. It carries out the reaction 1,2,3-tri-(9Z,12Z)-octadecadienoylglycerol + 9-hydroxy-octadecanoate = 2,3-di-(9Z,12Z)-octadecadienoyl-sn-glycerol + 9-(9Z,12Z-octadecadienoyloxy)-octadecanoate. It catalyses the reaction 1,2,3-tri-(9Z)-hexadecenoylglycerol + 9-hydroxy-octadecanoate = 2,3-di-(9Z)-hexadecenoyl-sn-glycerol + 9-(9Z-hexadecenoyloxy)-octadecanoate. The enzyme catalyses 9-hydroxy-octadecanoate + 1,2-di-(9Z-octadecenoyl)-sn-glycerol = 9-(9Z-octadecenoyloxy)-octadecanoate + 2-(9Z-octadecenoyl)-glycerol. The catalysed reaction is 1-hexadecanoyl-2,3-di-(9Z)-octadecenoyl-sn-glycerol + 9-hydroxy-octadecanoate = 1-hexadecanoyl-3-(9Z)-octadecenoyl-sn-glycerol + 9-(9Z-octadecenoyloxy)-octadecanoate. It participates in glycerolipid metabolism; triacylglycerol degradation. With respect to regulation, stimulated by PKA-dependent PLIN phosphorylation. In terms of biological role, catalyzes the initial step in triglyceride hydrolysis in adipocyte and non-adipocyte lipid droplets. Exhibits a strong preference for the hydrolysis of long-chain fatty acid esters at the sn-2 position of the glycerol backbone and acts coordinately with LIPE/HLS and DGAT2 within the lipolytic cascade. Also possesses acylglycerol transacylase and phospholipase A2 activities. Transfers fatty acid from triglyceride to retinol, hydrolyzes retinylesters, and generates 1,3-diacylglycerol from triglycerides. Regulates adiposome size and may be involved in the degradation of adiposomes. Catalyzes the formation of an ester bond between hydroxy fatty acids and fatty acids derived from triglycerides or diglycerides to generate fatty acid esters of hydroxy fatty acids (FAHFAs) in adipocytes. Acts antagonistically with LDAH in regulation of cellular lipid stores. Inhibits LDAH-stimulated lipid droplet fusion. May play an important role in energy homeostasis. May play a role in the response of the organism to starvation, enhancing hydrolysis of triglycerides and providing free fatty acids to other tissues to be oxidized in situations of energy depletion. This is Patatin-like phospholipase domain-containing protein 2 from Mus musculus (Mouse).